We begin with the raw amino-acid sequence, 512 residues long: FACT complex subunit pob3 (512 aa).

The span at 460-504 (LDDEDEEGDEEMEEALSEDEDFQAESESDVAEEYDENAESSDEEG) shows a compositional bias: acidic residues. A disordered region spans residues 460 to 512 (LDDEDEEGDEEMEEALSEDEDFQAESESDVAEEYDENAESSDEEGASGAEGSE).

The protein belongs to the SSRP1 family. Forms a stable heterodimer with spt16. The spt16-pob3 dimer weakly associates with multiple molecules of nhp6 to form the FACT complex. Interacts with abo1.

The protein resides in the nucleus. It localises to the chromosome. Component of the FACT complex, a general chromatin factor that acts to reorganize nucleosomes. The FACT complex is involved in multiple processes that require DNA as a template such as mRNA elongation, DNA replication and DNA repair. During transcription elongation the FACT complex acts as a histone chaperone that both destabilizes and restores nucleosomal structure. It facilitates the passage of RNA polymerase II and transcription by promoting the dissociation of one histone H2A-H2B dimer from the nucleosome, then subsequently promotes the reestablishment of the nucleosome following the passage of RNA polymerase II. The sequence is that of FACT complex subunit pob3 from Schizosaccharomyces pombe (strain 972 / ATCC 24843) (Fission yeast).